The sequence spans 238 residues: Probable 2-phosphosulfolactate phosphatase (238 aa).

This sequence belongs to the ComB family. Mg(2+) serves as cofactor.

It carries out the reaction (2R)-O-phospho-3-sulfolactate + H2O = (2R)-3-sulfolactate + phosphate. This Clostridium botulinum (strain Eklund 17B / Type B) protein is Probable 2-phosphosulfolactate phosphatase.